Consider the following 142-residue polypeptide: Transcription antitermination protein NusB (142 aa).

The protein belongs to the NusB family.

Its function is as follows. Involved in transcription antitermination. Required for transcription of ribosomal RNA (rRNA) genes. Binds specifically to the boxA antiterminator sequence of the ribosomal RNA (rrn) operons. In Latilactobacillus sakei subsp. sakei (strain 23K) (Lactobacillus sakei subsp. sakei), this protein is Transcription antitermination protein NusB.